The sequence spans 612 residues: Dihydroxy-acid dehydratase (612 aa).

Position 81 (Asp81) interacts with Mg(2+). Residue Cys122 coordinates [2Fe-2S] cluster. Residues Asp123 and Lys124 each coordinate Mg(2+). Lys124 carries the N6-carboxylysine modification. Cys195 serves as a coordination point for [2Fe-2S] cluster. Glu492 serves as a coordination point for Mg(2+). Residue Ser518 is the Proton acceptor of the active site.

It belongs to the IlvD/Edd family. In terms of assembly, homodimer. [2Fe-2S] cluster is required as a cofactor. Mg(2+) serves as cofactor.

It catalyses the reaction (2R)-2,3-dihydroxy-3-methylbutanoate = 3-methyl-2-oxobutanoate + H2O. The catalysed reaction is (2R,3R)-2,3-dihydroxy-3-methylpentanoate = (S)-3-methyl-2-oxopentanoate + H2O. Its pathway is amino-acid biosynthesis; L-isoleucine biosynthesis; L-isoleucine from 2-oxobutanoate: step 3/4. It participates in amino-acid biosynthesis; L-valine biosynthesis; L-valine from pyruvate: step 3/4. Functions in the biosynthesis of branched-chain amino acids. Catalyzes the dehydration of (2R,3R)-2,3-dihydroxy-3-methylpentanoate (2,3-dihydroxy-3-methylvalerate) into 2-oxo-3-methylpentanoate (2-oxo-3-methylvalerate) and of (2R)-2,3-dihydroxy-3-methylbutanoate (2,3-dihydroxyisovalerate) into 2-oxo-3-methylbutanoate (2-oxoisovalerate), the penultimate precursor to L-isoleucine and L-valine, respectively. The protein is Dihydroxy-acid dehydratase of Kocuria rhizophila (strain ATCC 9341 / DSM 348 / NBRC 103217 / DC2201).